A 55-amino-acid polypeptide reads, in one-letter code: Large ribosomal subunit protein bL33 (55 aa).

This sequence belongs to the bacterial ribosomal protein bL33 family.

This chain is Large ribosomal subunit protein bL33, found in Pectobacterium carotovorum subsp. carotovorum (strain PC1).